Here is a 461-residue protein sequence, read N- to C-terminus: Ornithine decarboxylase (461 aa).

Lys-69 carries the post-translational modification N6-(pyridoxal phosphate)lysine. Pyridoxal 5'-phosphate is bound by residues Ser-200, Gly-237, and 274–277 (EPGR). Position 303 is a phosphoserine; by CK2 (Ser-303). 331 to 332 (YD) is a substrate binding site. Cys-360 serves as the catalytic Proton donor; shared with dimeric partner. S-nitrosocysteine; in inhibited form is present on Cys-360. Asp-361 lines the substrate pocket. Pyridoxal 5'-phosphate is bound at residue Tyr-389.

It belongs to the Orn/Lys/Arg decarboxylase class-II family. Homodimer. Only the dimer is catalytically active, as the active sites are constructed of residues from both monomers. Does not form a heterodimer with AZIN2. Requires pyridoxal 5'-phosphate as cofactor. Post-translationally, S-Nitrosylation inhibits the enzyme. S-Nitrosylated in vitro on 4 cysteine residues.

The enzyme catalyses L-ornithine + H(+) = putrescine + CO2. It functions in the pathway amine and polyamine biosynthesis; putrescine biosynthesis via L-ornithine pathway; putrescine from L-ornithine: step 1/1. With respect to regulation, inhibited by S-nitrosylation. Inhibited by antizymes (AZs) OAZ1, OAZ2 and OAZ3 in response to polyamine levels. AZs inhibit the assembly of the functional homodimer by binding to ODC monomers. Additionally, OAZ1 targets ODC monomers for ubiquitin-independent proteolytic destruction by the 26S proteasome. Inhibited by 1-amino-oxy-3-aminopropane (APA, an isosteric analog of putrescine). Irreversibly inhibited by alpha-difluoromethylornithine (DFMO). Functionally, catalyzes the first and rate-limiting step of polyamine biosynthesis that converts ornithine into putrescine, which is the precursor for the polyamines, spermidine and spermine. Polyamines are essential for cell proliferation and are implicated in cellular processes, ranging from DNA replication to apoptosis. The polypeptide is Ornithine decarboxylase (ODC1) (Homo sapiens (Human)).